The chain runs to 1595 residues: Pentafunctional AROM polypeptide (1595 aa).

Positions 1–384 are 3-dehydroquinate synthase; the sequence is MGVPTKISIL…HEPRASTVSN (384 aa). Residues 44–46, 81–84, 114–116, and aspartate 119 each bind NAD(+); these read DTN, ESSK, and GGV. 7-phospho-2-dehydro-3-deoxy-D-arabino-heptonate is bound at residue arginine 130. 139-140 contributes to the NAD(+) binding site; the sequence is TT. Positions 146 and 152 each coordinate 7-phospho-2-dehydro-3-deoxy-D-arabino-heptonate. Lysine 161 serves as a coordination point for NAD(+). Asparagine 162 provides a ligand contact to 7-phospho-2-dehydro-3-deoxy-D-arabino-heptonate. NAD(+) is bound by residues 179-182 and asparagine 190; that span reads FLNT. Position 194 (glutamate 194) interacts with Zn(2+). 7-phospho-2-dehydro-3-deoxy-D-arabino-heptonate contacts are provided by residues 194–197 and lysine 250; that span reads EVIK. The active-site Proton acceptor; for 3-dehydroquinate synthase activity is glutamate 260. Residues 264 to 268 and histidine 271 each bind 7-phospho-2-dehydro-3-deoxy-D-arabino-heptonate; that span reads RNLLN. Residue histidine 271 coordinates Zn(2+). The Proton acceptor; for 3-dehydroquinate synthase activity role is filled by histidine 275. 7-phospho-2-dehydro-3-deoxy-D-arabino-heptonate is bound by residues histidine 287 and lysine 356. Histidine 287 lines the Zn(2+) pocket. The segment at 397–842 is EPSP synthase; the sequence is VSPGVPKGLD…WDSLAQTFKV (446 aa). The active-site For EPSP synthase activity is cysteine 824. A shikimate kinase region spans residues 866 to 1057; it reads ASIFIIGMRG…RRKENTFFVS (192 aa). 872–879 contacts ATP; it reads GMRGAGKT. The segment at 1058–1278 is 3-dehydroquinase; the sequence is LTLPDLGLAA…AAPGQLSARE (221 aa). The Proton acceptor; for 3-dehydroquinate dehydratase activity role is filled by histidine 1181. Lysine 1209 (schiff-base intermediate with substrate; for 3-dehydroquinate dehydratase activity) is an active-site residue. Positions 1291-1595 are shikimate dehydrogenase; the sequence is AKKFAVIGNP…MGVLPSEDIS (305 aa).

In the N-terminal section; belongs to the sugar phosphate cyclases superfamily. Dehydroquinate synthase family. It in the 2nd section; belongs to the EPSP synthase family. The protein in the 3rd section; belongs to the shikimate kinase family. This sequence in the 4th section; belongs to the type-I 3-dehydroquinase family. In the C-terminal section; belongs to the shikimate dehydrogenase family. As to quaternary structure, homodimer. The cofactor is Zn(2+).

It localises to the cytoplasm. The enzyme catalyses 7-phospho-2-dehydro-3-deoxy-D-arabino-heptonate = 3-dehydroquinate + phosphate. It catalyses the reaction 3-dehydroquinate = 3-dehydroshikimate + H2O. The catalysed reaction is shikimate + NADP(+) = 3-dehydroshikimate + NADPH + H(+). It carries out the reaction shikimate + ATP = 3-phosphoshikimate + ADP + H(+). The enzyme catalyses 3-phosphoshikimate + phosphoenolpyruvate = 5-O-(1-carboxyvinyl)-3-phosphoshikimate + phosphate. The protein operates within metabolic intermediate biosynthesis; chorismate biosynthesis; chorismate from D-erythrose 4-phosphate and phosphoenolpyruvate: step 2/7. It participates in metabolic intermediate biosynthesis; chorismate biosynthesis; chorismate from D-erythrose 4-phosphate and phosphoenolpyruvate: step 3/7. It functions in the pathway metabolic intermediate biosynthesis; chorismate biosynthesis; chorismate from D-erythrose 4-phosphate and phosphoenolpyruvate: step 4/7. Its pathway is metabolic intermediate biosynthesis; chorismate biosynthesis; chorismate from D-erythrose 4-phosphate and phosphoenolpyruvate: step 5/7. The protein operates within metabolic intermediate biosynthesis; chorismate biosynthesis; chorismate from D-erythrose 4-phosphate and phosphoenolpyruvate: step 6/7. Functionally, the AROM polypeptide catalyzes 5 consecutive enzymatic reactions in prechorismate polyaromatic amino acid biosynthesis. The polypeptide is Pentafunctional AROM polypeptide (Ajellomyces capsulatus (strain H143) (Darling's disease fungus)).